Reading from the N-terminus, the 398-residue chain is Acetate kinase (398 aa).

A Mg(2+)-binding site is contributed by asparagine 7. Residue lysine 14 participates in ATP binding. Substrate is bound at residue arginine 91. Residue aspartate 148 is the Proton donor/acceptor of the active site. ATP is bound by residues 208 to 212 (HLGNG), 283 to 285 (DFR), and 331 to 335 (GLGEN). Glutamate 384 is a binding site for Mg(2+).

Belongs to the acetokinase family. Homodimer. Mg(2+) serves as cofactor. The cofactor is Mn(2+).

Its subcellular location is the cytoplasm. It catalyses the reaction acetate + ATP = acetyl phosphate + ADP. It functions in the pathway metabolic intermediate biosynthesis; acetyl-CoA biosynthesis; acetyl-CoA from acetate: step 1/2. Catalyzes the formation of acetyl phosphate from acetate and ATP. Can also catalyze the reverse reaction. The chain is Acetate kinase from Natranaerobius thermophilus (strain ATCC BAA-1301 / DSM 18059 / JW/NM-WN-LF).